The following is an 892-amino-acid chain: Leucine--tRNA ligase (892 aa).

The 'HIGH' region signature appears at 42–52 (PYPSGKLHMGH). The 'KMSKS' region signature appears at 640-644 (TMSKS). ATP is bound at residue K643.

Belongs to the class-I aminoacyl-tRNA synthetase family.

Its subcellular location is the cytoplasm. It catalyses the reaction tRNA(Leu) + L-leucine + ATP = L-leucyl-tRNA(Leu) + AMP + diphosphate. The polypeptide is Leucine--tRNA ligase (Albidiferax ferrireducens (strain ATCC BAA-621 / DSM 15236 / T118) (Rhodoferax ferrireducens)).